Reading from the N-terminus, the 173-residue chain is Photosystem I assembly protein Ycf3 (173 aa).

3 TPR repeats span residues 35–68 (AFAY…EEDP), 72–105 (SYTF…NPKM), and 120–153 (GEQA…APDN).

The protein belongs to the Ycf3 family.

The protein resides in the plastid. It is found in the cyanelle thylakoid membrane. Functionally, essential for the assembly of the photosystem I (PSI) complex. May act as a chaperone-like factor to guide the assembly of the PSI subunits. This chain is Photosystem I assembly protein Ycf3, found in Cyanophora paradoxa.